We begin with the raw amino-acid sequence, 934 residues long: Bifunctional uridylyltransferase/uridylyl-removing enzyme (934 aa).

The interval 1-379 is uridylyltransferase; it reads MSAHDLKLEE…TFSRRKRKLS (379 aa). Residues 380 to 736 are uridylyl-removing; the sequence is DDGAFISENH…AKPHAFEAVT (357 aa). Residues 496-613 form the HD domain; that stretch reads VDEHLLRCIA…IDFADTVQTM (118 aa). ACT domains are found at residues 737-818 and 848-931; these read EITV…DMLA and VIEV…RSPQ.

This sequence belongs to the GlnD family. The cofactor is Mg(2+).

The catalysed reaction is [protein-PII]-L-tyrosine + UTP = [protein-PII]-uridylyl-L-tyrosine + diphosphate. The enzyme catalyses [protein-PII]-uridylyl-L-tyrosine + H2O = [protein-PII]-L-tyrosine + UMP + H(+). Its activity is regulated as follows. Uridylyltransferase (UTase) activity is inhibited by glutamine, while glutamine activates uridylyl-removing (UR) activity. Functionally, modifies, by uridylylation and deuridylylation, the PII regulatory proteins (GlnB and homologs), in response to the nitrogen status of the cell that GlnD senses through the glutamine level. Under low glutamine levels, catalyzes the conversion of the PII proteins and UTP to PII-UMP and PPi, while under higher glutamine levels, GlnD hydrolyzes PII-UMP to PII and UMP (deuridylylation). Thus, controls uridylylation state and activity of the PII proteins, and plays an important role in the regulation of nitrogen assimilation and metabolism. This Brucella melitensis biotype 2 (strain ATCC 23457) protein is Bifunctional uridylyltransferase/uridylyl-removing enzyme.